The following is a 514-amino-acid chain: Carboxysome shell carbonic anhydrase (514 aa).

The interval 1-27 (MAYRNRNLASQTQRPLAPTAPRRRPVV) is disordered. Position 175 (cysteine 175) interacts with Zn(2+). Aspartate 177 functions as the Proton acceptor in the catalytic mechanism. Positions 243 and 254 each coordinate Zn(2+).

The protein belongs to the beta-class carbonic anhydrase family. CsoSCA subfamily. As to quaternary structure, homodimer. Zn(2+) serves as cofactor.

The protein resides in the carboxysome. The enzyme catalyses hydrogencarbonate + H(+) = CO2 + H2O. In terms of biological role, reversible hydration of carbon dioxide. Essential for photosynthetic carbon dioxide fixation, supplies CO(2) to RuBisCO (ribulose bisphosphate carboxylase, cbbL-cbbS) in the carboxysome. This chain is Carboxysome shell carbonic anhydrase, found in Prochlorococcus marinus (strain MIT 9313).